Here is a 322-residue protein sequence, read N- to C-terminus: UDP-N-acetylenolpyruvoylglucosamine reductase (322 aa).

The FAD-binding PCMH-type domain occupies 36–202; the sequence is RAGGPAQVLF…TSVLFEGVPG (167 aa). R182 is a catalytic residue. S231 serves as the catalytic Proton donor. The active site involves E301.

This sequence belongs to the MurB family. The cofactor is FAD.

It localises to the cytoplasm. It carries out the reaction UDP-N-acetyl-alpha-D-muramate + NADP(+) = UDP-N-acetyl-3-O-(1-carboxyvinyl)-alpha-D-glucosamine + NADPH + H(+). Its pathway is cell wall biogenesis; peptidoglycan biosynthesis. In terms of biological role, cell wall formation. This is UDP-N-acetylenolpyruvoylglucosamine reductase from Brucella melitensis biotype 2 (strain ATCC 23457).